A 336-amino-acid polypeptide reads, in one-letter code: Serpentine receptor class gamma-9 (336 aa).

Transmembrane regions (helical) follow at residues Leu30–Ile50, Phe64–Ile84, Ile111–Thr131, Leu152–Ile172, Phe200–Phe220, Leu237–Leu257, and Phe271–Phe291.

This sequence belongs to the nematode receptor-like protein srg family.

It is found in the membrane. The sequence is that of Serpentine receptor class gamma-9 (srg-9) from Caenorhabditis elegans.